The chain runs to 330 residues: Mas-related G-protein coupled receptor member X2 (330 aa).

Over 1–33 the chain is Extracellular; the sequence is MDPTTPAWGTESTTMNGNDQALPLLCGKETLIL. A helical transmembrane segment spans residues 34–54; sequence VLLILFIALVGLVGNAFVLWL. At 55–63 the chain is on the cytoplasmic side; the sequence is LGFRMRRNA. The helical transmembrane segment at 64–84 threads the bilayer; that stretch reads FSVYVLSLAGADFLFLCFPMI. Topologically, residues 85 to 96 are extracellular; sequence NCLEYLINFFHS. The chain crosses the membrane as a helical span at residues 97–117; sequence ISINFPSFFTTVMTCAYLAGL. Over 118 to 144 the chain is Cytoplasmic; that stretch reads SMLSAISTERCLSVLWPIWYRCRRPRH. The chain crosses the membrane as a helical span at residues 145–165; sequence LSAVLCVLLWALSLLLSILEG. The Extracellular portion of the chain corresponds to 166 to 184; that stretch reads KFCGLLFSDGDSGWCQTFD. Residues 185-205 form a helical membrane-spanning segment; that stretch reads FITAAWLMFLFVVLCGSSLAL. At 206 to 228 the chain is on the cytoplasmic side; it reads LVRILCGSQGLPLTRLYLTILLT. The chain crosses the membrane as a helical span at residues 229–249; sequence VLIFLLCGLPFGIQWFLILWI. The Extracellular segment spans residues 250 to 264; it reads WKNSDVLFCHIHPVS. Residues 265 to 285 form a helical membrane-spanning segment; the sequence is VVLSSFNSSANPIIYFFVGSF. Residues 286-330 lie on the Cytoplasmic side of the membrane; the sequence is RKQWRLRQPVLKLALQRALQDTAEVDHSEGCFSQGTLEMSGSSLV.

It belongs to the G-protein coupled receptor 1 family. Mas subfamily.

The protein localises to the cell membrane. Mast cell-specific receptor for basic secretagogues, i.e. cationic amphiphilic drugs, as well as endo- or exogenous peptides, consisting of a basic head group and a hydrophobic core. Recognizes and binds small molecules containing a cyclized tetrahydroisoquinoline (THIQ), such as non-steroidal neuromuscular blocking drugs (NMBDs), including tubocurarine and atracurium. In response to these compounds, mediates pseudo-allergic reactions characterized by histamine release, inflammation and airway contraction. In Rhinopithecus bieti (Black snub-nosed monkey), this protein is Mas-related G-protein coupled receptor member X2 (MRGPRX2).